Consider the following 216-residue polypeptide: Elongation factor 1-beta (216 aa).

The protein belongs to the EF-1-beta/EF-1-delta family. In terms of assembly, EF-1 is composed of 4 subunits: alpha, beta, delta, and gamma. Interacts with actin.

The protein resides in the cytoplasm. In terms of biological role, EF-1-beta and EF-1-delta stimulate the exchange of GDP bound to EF-1-alpha to GTP. The polypeptide is Elongation factor 1-beta (efa1B) (Dictyostelium discoideum (Social amoeba)).